The following is a 319-amino-acid chain: Acetyl-coenzyme A carboxylase carboxyl transferase subunit alpha (319 aa).

The region spanning 32–293 (NVDTEVRALE…KAVLLNELEA (262 aa)) is the CoA carboxyltransferase C-terminal domain.

Belongs to the AccA family. Acetyl-CoA carboxylase is a heterohexamer composed of biotin carboxyl carrier protein (AccB), biotin carboxylase (AccC) and two subunits each of ACCase subunit alpha (AccA) and ACCase subunit beta (AccD).

It localises to the cytoplasm. The enzyme catalyses N(6)-carboxybiotinyl-L-lysyl-[protein] + acetyl-CoA = N(6)-biotinyl-L-lysyl-[protein] + malonyl-CoA. Its pathway is lipid metabolism; malonyl-CoA biosynthesis; malonyl-CoA from acetyl-CoA: step 1/1. Component of the acetyl coenzyme A carboxylase (ACC) complex. First, biotin carboxylase catalyzes the carboxylation of biotin on its carrier protein (BCCP) and then the CO(2) group is transferred by the carboxyltransferase to acetyl-CoA to form malonyl-CoA. The sequence is that of Acetyl-coenzyme A carboxylase carboxyl transferase subunit alpha from Xylella fastidiosa (strain M12).